Consider the following 253-residue polypeptide: Salivary gland SP38-40.B protein (253 aa).

Residues methionine 1 to alanine 21 form the signal peptide. Disordered regions lie at residues glycine 23 to aspartate 51, lysine 140 to serine 168, and valine 203 to lysine 253. Composition is skewed to basic and acidic residues over residues glycine 26–aspartate 51 and proline 154–serine 168. 2 consecutive repeat copies span residues lysine 29–proline 34 and lysine 35–proline 40. The 3 X 6 AA approximate tandem repeats of K-P-K-D-A-P stretch occupies residues lysine 29–proline 47. Residues lysine 41–proline 47 form a 1-3; approximate repeat. A run of 2 repeats spans residues lysine 153–lysine 156 and lysine 158–lysine 161. The tract at residues lysine 153–glutamate 166 is 3 X 4 AA approximate tandem repeats of K-P-P-K. The stretch at lysine 162–glutamate 166 is one 2-3; approximate repeat. Over residues lysine 206 to glycine 217 the composition is skewed to basic residues. A run of 6 repeats spans residues proline 222 to glycine 225, proline 226 to alanine 229, proline 230 to glycine 233, proline 234 to alanine 237, proline 238 to valine 241, and proline 242 to alanine 245. Positions proline 222–lysine 249 are 7 X 4 AA approximate tandem repeats of P-K-P-[GAV]. Residues glycine 225–lysine 243 are compositionally biased toward pro residues. A compositionally biased stretch (basic and acidic residues) spans proline 244 to lysine 253. The stretch at aspartate 246–lysine 249 is one 3-7; approximate repeat.

As to expression, salivary gland.

It localises to the secreted. In terms of biological role, used by the larvae to construct a supramolecular structure, the larval tube. The chain is Salivary gland SP38-40.B protein (SP38-40.B) from Chironomus tentans (Midge).